A 517-amino-acid polypeptide reads, in one-letter code: Acetyl-coenzyme A carboxylase carboxyl transferase subunit beta, chloroplastic (517 aa).

4 stretches are compositionally biased toward basic and acidic residues: residues 1–17 (MKPT…KSNE), 24–41 (GDNK…KSNE), 48–65 (GDNK…KSNE), and 72–81 (GDKQKDKKDG). Disordered regions lie at residues 1–179 (MKPT…KEEE) and 204–234 (KHRD…DSEA). Acidic residues predominate over residues 87–131 (YDDEYEEDLEYDDEYEEDLEYDDEYEEDLEYDDEEYDDEYEEDLE). 2 stretches are compositionally biased toward basic and acidic residues: residues 132 to 179 (GDNK…KEEE) and 209 to 229 (KSVP…RDTD). A CoA carboxyltransferase N-terminal domain is found at 243-514 (LWVHCKLCSG…NSQVINIYNY (272 aa)). Residues Cys-247, Cys-250, Cys-266, and Cys-269 each contribute to the Zn(2+) site. The segment at 247 to 269 (CKLCSGFNYKKILKSKNNVCEQC) adopts a C4-type zinc-finger fold.

It belongs to the AccD/PCCB family. Acetyl-CoA carboxylase is a heterohexamer composed of biotin carboxyl carrier protein, biotin carboxylase and 2 subunits each of ACCase subunit alpha and ACCase plastid-coded subunit beta (accD). Requires Zn(2+) as cofactor.

The protein resides in the plastid. Its subcellular location is the chloroplast stroma. It carries out the reaction N(6)-carboxybiotinyl-L-lysyl-[protein] + acetyl-CoA = N(6)-biotinyl-L-lysyl-[protein] + malonyl-CoA. It participates in lipid metabolism; malonyl-CoA biosynthesis; malonyl-CoA from acetyl-CoA: step 1/1. Its function is as follows. Component of the acetyl coenzyme A carboxylase (ACC) complex. Biotin carboxylase (BC) catalyzes the carboxylation of biotin on its carrier protein (BCCP) and then the CO(2) group is transferred by the transcarboxylase to acetyl-CoA to form malonyl-CoA. The protein is Acetyl-coenzyme A carboxylase carboxyl transferase subunit beta, chloroplastic of Oenothera elata subsp. hookeri (Hooker's evening primrose).